The chain runs to 1645 residues: Cortactin-binding protein 2 (1645 aa).

Disordered stretches follow at residues 1–28 (MATD…EAAK), 269–293 (LKRG…SVSI), 366–435 (IVSS…AALH), 451–478 (GNAN…SRDS), and 492–612 (ALSR…PPKP). Residues 119–276 (RKMQERMSTQ…EQLKRGNDSK (158 aa)) adopt a coiled-coil conformation. Composition is skewed to polar residues over residues 407–417 (QTPTIAPQSHA) and 451–477 (GNAN…TSRD). Residue arginine 495 is modified to Asymmetric dimethylarginine. Over residues 580–590 (TMASPPSTLPQ) the composition is skewed to polar residues. 6 ANK repeats span residues 706–736 (GRPT…DINY), 740–769 (DGHS…QVNA), 773–802 (NGFT…NINH), 806–835 (EGQT…DRSV), 839–868 (DGWT…PARR), and 909–939 (EGWT…EPER). The segment at 868–898 (RNSLHEEEPESGVFDLDQGEESPEGTSKPVI) is disordered. Residues 1442-1479 (CSRKKGESGAWRKVSTSPRKKSGRFSPPSWSKPGPSEE) form a disordered region. Phosphoserine is present on serine 1521. The interval 1551 to 1645 (DDLRSFDSPG…EINNNSKEEI (95 aa)) is disordered. 2 stretches are compositionally biased toward polar residues: residues 1558 to 1569 (SPGNSPAFSATV) and 1582 to 1597 (PFSS…SQSK). The segment covering 1620 to 1634 (SQNTKRSSSSSNTRQ) has biased composition (low complexity). Residues 1635–1645 (IEINNNSKEEI) show a composition bias toward polar residues.

In terms of assembly, interacts with CTTN/cortactin SH3 domain. Interacts with STRN, STRN4/zinedin and MOB4/phocein; this interactions mediate the association with the STRIPAK core complex and may regulate dendritic spine distribution of the STRIPAK complex in hippocampal neurons. Activation of glutamate receptors weakens the interaction with STRN and STRN4.

The protein localises to the cytoplasm. Its subcellular location is the cell cortex. It is found in the cell projection. The protein resides in the dendritic spine. Regulates the dendritic spine distribution of CTTN/cortactin in hippocampal neurons, and thus controls dendritic spinogenesis and dendritic spine maintenance. Associates with the striatin-interacting phosphatase and kinase (STRIPAK) core complex to regulate dendritic spine distribution of the STRIPAK complex in hippocampal neurons. The sequence is that of Cortactin-binding protein 2 (CTTNBP2) from Mustela putorius furo (European domestic ferret).